The primary structure comprises 141 residues: Large ribosomal subunit protein uL11 (141 aa).

It belongs to the universal ribosomal protein uL11 family. In terms of assembly, part of the ribosomal stalk of the 50S ribosomal subunit. Interacts with L10 and the large rRNA to form the base of the stalk. L10 forms an elongated spine to which L12 dimers bind in a sequential fashion forming a multimeric L10(L12)X complex. One or more lysine residues are methylated.

Its function is as follows. Forms part of the ribosomal stalk which helps the ribosome interact with GTP-bound translation factors. The protein is Large ribosomal subunit protein uL11 of Syntrophus aciditrophicus (strain SB).